Here is a 533-residue protein sequence, read N- to C-terminus: Undecaprenyl phosphate-alpha-4-amino-4-deoxy-L-arabinose arabinosyl transferase (533 aa).

The next 13 membrane-spanning stretches (helical) occupy residues 10–30, 64–84, 86–106, 113–133, 137–157, 170–190, 207–227, 257–277, 290–310, 312–332, 345–365, 377–397, and 402–422; these read LLLA…GLWI, PAGY…LFGV, IASA…AGKI, SFAS…AGYS, PQFT…VHSI, VACG…PAII, FGPL…LAVH, WWFY…LLPV, DTAF…LSKG, LPTY…DALV, VNGI…IYVQ, HLLL…LQGI, and FWAL…AALP.

The protein belongs to the glycosyltransferase 83 family.

The protein resides in the cell inner membrane. The enzyme catalyses 4-amino-4-deoxy-alpha-L-arabinopyranosyl di-trans,octa-cis-undecaprenyl phosphate + lipid IVA = lipid IIA + di-trans,octa-cis-undecaprenyl phosphate.. The protein operates within lipopolysaccharide metabolism; 4-amino-4-deoxy-beta-L-arabinose-lipid A biosynthesis. Functionally, catalyzes the transfer of the L-Ara4N moiety of the glycolipid undecaprenyl phosphate-alpha-L-Ara4N to lipid A. The modified arabinose is attached to lipid A and is required for resistance to polymyxin and cationic antimicrobial peptides. This is Undecaprenyl phosphate-alpha-4-amino-4-deoxy-L-arabinose arabinosyl transferase from Pseudomonas savastanoi pv. phaseolicola (strain 1448A / Race 6) (Pseudomonas syringae pv. phaseolicola (strain 1448A / Race 6)).